A 274-amino-acid chain; its full sequence is 3-methyl-2-oxobutanoate hydroxymethyltransferase (274 aa).

Mg(2+) contacts are provided by aspartate 50 and aspartate 89. 3-methyl-2-oxobutanoate-binding positions include 50–51 (DS), aspartate 89, and lysine 119. Glutamate 121 provides a ligand contact to Mg(2+). The Proton acceptor role is filled by glutamate 188.

This sequence belongs to the PanB family. As to quaternary structure, homodecamer; pentamer of dimers. Mg(2+) is required as a cofactor.

The protein resides in the cytoplasm. The enzyme catalyses 3-methyl-2-oxobutanoate + (6R)-5,10-methylene-5,6,7,8-tetrahydrofolate + H2O = 2-dehydropantoate + (6S)-5,6,7,8-tetrahydrofolate. The protein operates within cofactor biosynthesis; (R)-pantothenate biosynthesis; (R)-pantoate from 3-methyl-2-oxobutanoate: step 1/2. Its function is as follows. Catalyzes the reversible reaction in which hydroxymethyl group from 5,10-methylenetetrahydrofolate is transferred onto alpha-ketoisovalerate to form ketopantoate. The chain is 3-methyl-2-oxobutanoate hydroxymethyltransferase from Methylorubrum populi (strain ATCC BAA-705 / NCIMB 13946 / BJ001) (Methylobacterium populi).